Consider the following 500-residue polypeptide: NAD(P)H-quinone oxidoreductase chain 4, chloroplastic (500 aa).

The next 14 membrane-spanning stretches (helical) occupy residues Phe4–Leu24, Tyr35–Phe55, Ile87–Ile107, Leu113–Ser130, Leu134–Met154, Phe167–Leu187, Val208–Ile228, His242–Ile262, Ala272–Ala292, Ile305–Asp325, Gly330–Gly350, Leu386–Thr406, Leu411–Ile431, and Leu462–Val482.

The protein belongs to the complex I subunit 4 family.

The protein localises to the plastid. It localises to the chloroplast thylakoid membrane. The catalysed reaction is a plastoquinone + NADH + (n+1) H(+)(in) = a plastoquinol + NAD(+) + n H(+)(out). The enzyme catalyses a plastoquinone + NADPH + (n+1) H(+)(in) = a plastoquinol + NADP(+) + n H(+)(out). In Nicotiana tomentosiformis (Tobacco), this protein is NAD(P)H-quinone oxidoreductase chain 4, chloroplastic.